The primary structure comprises 214 residues: NAD(P)H-quinone oxidoreductase subunit 5, chloroplastic (214 aa).

A run of 2 helical transmembrane segments spans residues 84 to 104 (LFPLLILLLFTFFIGFIGIPF) and 152 to 172 (SLAILGLFIAYIFYGSAYSFF).

Belongs to the complex I subunit 5 family. In terms of assembly, NDH is composed of at least 16 different subunits, 5 of which are encoded in the nucleus.

Its subcellular location is the plastid. It is found in the chloroplast thylakoid membrane. It catalyses the reaction a plastoquinone + NADH + (n+1) H(+)(in) = a plastoquinol + NAD(+) + n H(+)(out). The enzyme catalyses a plastoquinone + NADPH + (n+1) H(+)(in) = a plastoquinol + NADP(+) + n H(+)(out). In terms of biological role, NDH shuttles electrons from NAD(P)H:plastoquinone, via FMN and iron-sulfur (Fe-S) centers, to quinones in the photosynthetic chain and possibly in a chloroplast respiratory chain. The immediate electron acceptor for the enzyme in this species is believed to be plastoquinone. Couples the redox reaction to proton translocation, and thus conserves the redox energy in a proton gradient. This is NAD(P)H-quinone oxidoreductase subunit 5, chloroplastic (ndhF) from Brachypodium sylvaticum (False brome).